Here is a 208-residue protein sequence, read N- to C-terminus: Cytochrome c oxidase assembly protein CtaG (208 aa).

At 1–19 (MSPPLPQAPQQPAPRRGLG) the chain is on the cytoplasmic side. Residues 20–42 (HDTAVAAVCGLVVALMVGASFAA) traverse the membrane as a helical; Signal-anchor for type II membrane protein segment. The Periplasmic portion of the chain corresponds to 43–208 (VPFYNWFCRT…SEPAPRKGNL (166 aa)).

It belongs to the COX11/CtaG family.

Its subcellular location is the cell inner membrane. Its function is as follows. Exerts its effect at some terminal stage of cytochrome c oxidase synthesis, probably by being involved in the insertion of the copper B into subunit I. In Rhodopseudomonas palustris (strain TIE-1), this protein is Cytochrome c oxidase assembly protein CtaG.